We begin with the raw amino-acid sequence, 259 residues long: Phosphatidylglycerol--prolipoprotein diacylglyceryl transferase (259 aa).

Transmembrane regions (helical) follow at residues 9–29 (IIFSIGPLAISWYSLSYVIGI), 55–75 (FITYAVIGIIVGGRLGFVLLY), 92–112 (EGGMSFHGGALGGIITAYLFC), and 117–137 (INFLSLTDIIAPVVPIGLFLG). R138 is an a 1,2-diacyl-sn-glycero-3-phospho-(1'-sn-glycerol) binding site. 3 helical membrane passes run 172-192 (QLYEAFFEGLVLFSILAYTTF), 201-221 (GLNSGIFFTFYGLFRITIEIF), and 228-248 (IGFILDSLTMGQILSVPMLLL).

The protein belongs to the Lgt family.

The protein localises to the cell inner membrane. The enzyme catalyses L-cysteinyl-[prolipoprotein] + a 1,2-diacyl-sn-glycero-3-phospho-(1'-sn-glycerol) = an S-1,2-diacyl-sn-glyceryl-L-cysteinyl-[prolipoprotein] + sn-glycerol 1-phosphate + H(+). It participates in protein modification; lipoprotein biosynthesis (diacylglyceryl transfer). Catalyzes the transfer of the diacylglyceryl group from phosphatidylglycerol to the sulfhydryl group of the N-terminal cysteine of a prolipoprotein, the first step in the formation of mature lipoproteins. The polypeptide is Phosphatidylglycerol--prolipoprotein diacylglyceryl transferase (Rickettsia africae (strain ESF-5)).